The sequence spans 645 residues: Putative palmitoyltransferase ZDHHC13 (645 aa).

The interval 1 to 73 is disordered; the sequence is MDWSEGDGSH…KSSHPEDSSS (73 aa). At 1–314 the chain is on the cytoplasmic side; sequence MDWSEGDGSH…ACLKLLNRYK (314 aa). A compositionally biased stretch (basic and acidic residues) spans 7-20; sequence DGSHSHGHMGDSCH. Basic residues predominate over residues 23–33; sequence GGGHSHGHGHS. Residues 34-43 show a composition bias toward gly residues; the sequence is HGGSGFGGFM. ANK repeat units lie at residues 104–133, 138–167, 171–200, 204–234, and 239–268; these read ENVTLLHWAAINNRADIVKYYISKGAVIDQ, LNSTPLHWAIRQGHLSMVIQLMRYGADPSL, EGYRGLHLAVLFQNMPIAAYLMAKGQEVDL, NGQTPLMLAAQKIIGPEPTNFLIKCNASVNA, and NRNSPLHCAVLAGNVDSVHILLEAGASVDM. Residues 315–335 traverse the membrane as a helical segment; sequence VCLQSVFSVVVVGAFGAILDM. A topological domain (lumenal) is located at residue Arg-336. The helical transmembrane segment at 337 to 357 threads the bilayer; it reads TESWLLKGILLACIMAVINLA. At 358 to 369 the chain is on the cytoplasmic side; the sequence is SRQLATVAVRSL. A helical membrane pass occupies residues 370–390; that stretch reads IPSTGLIASVFWMVVTWVLWF. Over 391 to 394 the chain is Lumenal; the sequence is LPDE. The helical transmembrane segment at 395 to 415 threads the bilayer; it reads PSAAVQMLFTVNITAVLYYYI. Residues 416–492 lie on the Cytoplasmic side of the membrane; that stretch reads RSCRTDPGHV…NGCIGARNHP (77 aa). The DHHC domain maps to 449–499; that stretch reads IFCTSCMMRKPMRANHCFSCNACVAKQDHHSIWINGCIGARNHPFFVLFLV. Residues 493–513 traverse the membrane as a helical segment; that stretch reads FFVLFLVALNFLCIWMFYGSI. At 514–542 the chain is on the lumenal side; sequence TYWSRHCPLHYSEEGIWGALTALMGCSPW. Residues 543 to 563 traverse the membrane as a helical segment; the sequence is LLYVFCFVFFHTTWASILLVL. Residues 564–645 lie on the Cytoplasmic side of the membrane; that stretch reads QLYQIAFLGL…RDMFSSPDAV (82 aa).

It belongs to the DHHC palmitoyltransferase family. AKR/ZDHHC17 subfamily.

It localises to the golgi apparatus membrane. The protein localises to the cytoplasmic vesicle membrane. Its function is as follows. Putative palmitoyltransferase that could catalyze the addition of palmitate onto various protein substrates. The sequence is that of Putative palmitoyltransferase ZDHHC13 from Danio rerio (Zebrafish).